The following is a 250-amino-acid chain: 5'-nucleotidase SurE (250 aa).

Residues Asp8, Asp9, Ser39, and Asn91 each coordinate a divalent metal cation.

This sequence belongs to the SurE nucleotidase family. Requires a divalent metal cation as cofactor.

The protein localises to the cytoplasm. The catalysed reaction is a ribonucleoside 5'-phosphate + H2O = a ribonucleoside + phosphate. Nucleotidase that shows phosphatase activity on nucleoside 5'-monophosphates. The chain is 5'-nucleotidase SurE from Leptospira borgpetersenii serovar Hardjo-bovis (strain JB197).